The chain runs to 231 residues: Aminodeoxyfutalosine nucleosidase (231 aa).

The active-site Proton acceptor is Glu-14. Substrate contacts are provided by residues Gly-81, Val-155, and 175–176; that span reads ME. Asp-199 functions as the Proton donor in the catalytic mechanism.

Belongs to the PNP/UDP phosphorylase family. Homodimer.

It carries out the reaction 6-amino-6-deoxyfutalosine + H2O = dehypoxanthine futalosine + adenine. It catalyses the reaction S-adenosyl-L-homocysteine + H2O = S-(5-deoxy-D-ribos-5-yl)-L-homocysteine + adenine. The enzyme catalyses S-methyl-5'-thioadenosine + H2O = 5-(methylsulfanyl)-D-ribose + adenine. The catalysed reaction is 5'-deoxyadenosine + H2O = 5-deoxy-D-ribose + adenine. Its pathway is quinol/quinone metabolism; menaquinone biosynthesis. The protein operates within amino-acid biosynthesis; L-methionine biosynthesis via salvage pathway; S-methyl-5-thio-alpha-D-ribose 1-phosphate from S-methyl-5'-thioadenosine (hydrolase route): step 1/2. Its function is as follows. Catalyzes the direct conversion of aminodeoxyfutalosine (AFL) into dehypoxanthine futalosine (DHFL) and adenine via the hydrolysis of the N-glycosidic bond; this reaction seems to represent an essential step in the menaquinone biosynthesis pathway in Helicobacter species. Can also probably catalyzes the hydrolysis of 5'-methylthioadenosine (MTA) and S-adenosylhomocysteine (SAH) to adenine and the corresponding thioribose, 5'-methylthioribose and S-ribosylhomocysteine, respectively. These other activities highlight the tremendous versatility of the enzyme, which also plays key roles in S-adenosylmethionine recycling and in the biosynthesis of the quorum-sensing molecule autoinducer-2. Does not act on futalosine (FL) as substrate. The sequence is that of Aminodeoxyfutalosine nucleosidase (mtnN) from Helicobacter pylori (strain ATCC 700392 / 26695) (Campylobacter pylori).